Here is a 178-residue protein sequence, read N- to C-terminus: Protein GrpE (178 aa).

It belongs to the GrpE family. Homodimer.

It localises to the cytoplasm. Functionally, participates actively in the response to hyperosmotic and heat shock by preventing the aggregation of stress-denatured proteins, in association with DnaK and GrpE. It is the nucleotide exchange factor for DnaK and may function as a thermosensor. Unfolded proteins bind initially to DnaJ; upon interaction with the DnaJ-bound protein, DnaK hydrolyzes its bound ATP, resulting in the formation of a stable complex. GrpE releases ADP from DnaK; ATP binding to DnaK triggers the release of the substrate protein, thus completing the reaction cycle. Several rounds of ATP-dependent interactions between DnaJ, DnaK and GrpE are required for fully efficient folding. This chain is Protein GrpE, found in Rickettsia typhi (strain ATCC VR-144 / Wilmington).